Consider the following 204-residue polypeptide: Urease accessory protein UreG (204 aa).

Residue 15-22 participates in GTP binding; that stretch reads GPVGSGKT.

It belongs to the SIMIBI class G3E GTPase family. UreG subfamily. In terms of assembly, homodimer. UreD, UreF and UreG form a complex that acts as a GTP-hydrolysis-dependent molecular chaperone, activating the urease apoprotein by helping to assemble the nickel containing metallocenter of UreC. The UreE protein probably delivers the nickel.

The protein localises to the cytoplasm. Facilitates the functional incorporation of the urease nickel metallocenter. This process requires GTP hydrolysis, probably effectuated by UreG. This chain is Urease accessory protein UreG, found in Methylobacterium nodulans (strain LMG 21967 / CNCM I-2342 / ORS 2060).